Here is a 221-residue protein sequence, read N- to C-terminus: Thiamine-phosphate synthase (221 aa).

4-amino-2-methyl-5-(diphosphooxymethyl)pyrimidine is bound by residues 46–50 (QFREK) and N82. Positions 83 and 102 each coordinate Mg(2+). S121 provides a ligand contact to 4-amino-2-methyl-5-(diphosphooxymethyl)pyrimidine. Position 148 to 150 (148 to 150 (TQS)) interacts with 2-[(2R,5Z)-2-carboxy-4-methylthiazol-5(2H)-ylidene]ethyl phosphate. K151 lines the 4-amino-2-methyl-5-(diphosphooxymethyl)pyrimidine pocket. Residues G180 and 200–201 (IS) each bind 2-[(2R,5Z)-2-carboxy-4-methylthiazol-5(2H)-ylidene]ethyl phosphate.

The protein belongs to the thiamine-phosphate synthase family. Mg(2+) serves as cofactor.

It catalyses the reaction 2-[(2R,5Z)-2-carboxy-4-methylthiazol-5(2H)-ylidene]ethyl phosphate + 4-amino-2-methyl-5-(diphosphooxymethyl)pyrimidine + 2 H(+) = thiamine phosphate + CO2 + diphosphate. It carries out the reaction 2-(2-carboxy-4-methylthiazol-5-yl)ethyl phosphate + 4-amino-2-methyl-5-(diphosphooxymethyl)pyrimidine + 2 H(+) = thiamine phosphate + CO2 + diphosphate. The enzyme catalyses 4-methyl-5-(2-phosphooxyethyl)-thiazole + 4-amino-2-methyl-5-(diphosphooxymethyl)pyrimidine + H(+) = thiamine phosphate + diphosphate. Its pathway is cofactor biosynthesis; thiamine diphosphate biosynthesis; thiamine phosphate from 4-amino-2-methyl-5-diphosphomethylpyrimidine and 4-methyl-5-(2-phosphoethyl)-thiazole: step 1/1. Its function is as follows. Condenses 4-methyl-5-(beta-hydroxyethyl)thiazole monophosphate (THZ-P) and 2-methyl-4-amino-5-hydroxymethyl pyrimidine pyrophosphate (HMP-PP) to form thiamine monophosphate (TMP). The polypeptide is Thiamine-phosphate synthase (Pasteurella multocida (strain Pm70)).